The sequence spans 141 residues: MAKKVEKLVKLQIPAGKATPAPPVGPALGQAGINIMGFTKEFNARTADQAGMIIPVVISVYEDKSFTFITKTPPAAVLLKKAAGVEKGSGTPNKTKVATVTRAQVQEIAETKMPDLNAASLEAAMRMIEGTARSMGFTVTD.

Belongs to the universal ribosomal protein uL11 family. In terms of assembly, part of the ribosomal stalk of the 50S ribosomal subunit. Interacts with L10 and the large rRNA to form the base of the stalk. L10 forms an elongated spine to which L12 dimers bind in a sequential fashion forming a multimeric L10(L12)X complex. One or more lysine residues are methylated.

In terms of biological role, forms part of the ribosomal stalk which helps the ribosome interact with GTP-bound translation factors. In Streptococcus suis (strain 98HAH33), this protein is Large ribosomal subunit protein uL11.